The primary structure comprises 811 residues: U-box domain-containing protein 43 (811 aa).

In terms of domain architecture, U-box spans 24–103 (NIYEAFICPL…EEWRARNDAL (80 aa)). ARM repeat units lie at residues 136 to 175 (RKIR…VVVE), 178 to 217 (EESK…ELSK), 220 to 261 (ALCE…NLER), 263 to 302 (EENV…VLAL), 303 to 342 (NNDV…NISS), 344 to 388 (EGSA…NIVN), 399 to 438 (GPHH…GLTS), 444 to 484 (INVV…NISP), and 489 to 528 (ELAN…LLAE).

The catalysed reaction is S-ubiquitinyl-[E2 ubiquitin-conjugating enzyme]-L-cysteine + [acceptor protein]-L-lysine = [E2 ubiquitin-conjugating enzyme]-L-cysteine + N(6)-ubiquitinyl-[acceptor protein]-L-lysine.. It participates in protein modification; protein ubiquitination. Functions as an E3 ubiquitin ligase. This Arabidopsis thaliana (Mouse-ear cress) protein is U-box domain-containing protein 43 (PUB43).